A 90-amino-acid chain; its full sequence is MGRWICMYHTVPHARPSLADRRVFRIQPVTQFLATTTTFQHRASSEASYVPLEPGLLLLCCFYPIGNLILLVRLSLVLRNGSLVLPLSCV.

The chain crosses the membrane as a helical span at residues 55-77; it reads GLLLLCCFYPIGNLILLVRLSLV. Asn80 is a glycosylation site (N-linked (GlcNAc...) asparagine).

The protein resides in the membrane. Functionally, cluster 41 protein; part of the gene cluster 41 that mediates the biosynthesis of an extracellular and diffusible metabolite that is able to stimulate colony sclerotial production. The protein is Cluster 41 protein AFLA_114800 of Aspergillus flavus (strain ATCC 200026 / FGSC A1120 / IAM 13836 / NRRL 3357 / JCM 12722 / SRRC 167).